The sequence spans 262 residues: Acyl-[acyl-carrier-protein]--UDP-N-acetylglucosamine O-acyltransferase (262 aa).

Belongs to the transferase hexapeptide repeat family. LpxA subfamily. As to quaternary structure, homotrimer.

The protein localises to the cytoplasm. It carries out the reaction a (3R)-hydroxyacyl-[ACP] + UDP-N-acetyl-alpha-D-glucosamine = a UDP-3-O-[(3R)-3-hydroxyacyl]-N-acetyl-alpha-D-glucosamine + holo-[ACP]. The protein operates within glycolipid biosynthesis; lipid IV(A) biosynthesis; lipid IV(A) from (3R)-3-hydroxytetradecanoyl-[acyl-carrier-protein] and UDP-N-acetyl-alpha-D-glucosamine: step 1/6. Functionally, involved in the biosynthesis of lipid A, a phosphorylated glycolipid that anchors the lipopolysaccharide to the outer membrane of the cell. The polypeptide is Acyl-[acyl-carrier-protein]--UDP-N-acetylglucosamine O-acyltransferase (Yersinia pseudotuberculosis serotype O:1b (strain IP 31758)).